The chain runs to 326 residues: Homocysteine S-methyltransferase 1 (326 aa).

A Hcy-binding domain is found at 9–323; that stretch reads LLEDLIEKCG…STIKAISRDL (315 aa). 3 residues coordinate Zn(2+): C241, C308, and C309.

Zn(2+) serves as cofactor. Expressed in roots, young leaves, florets and flowers. Not detected in old leaves.

The enzyme catalyses S-methyl-L-methionine + L-homocysteine = 2 L-methionine + H(+). Its activity is regulated as follows. Inhibited by L-methionine. Its function is as follows. Catalyzes methyl transfer from S-methylmethionine to homocysteine. The highest preference is for DL-homocysteine &gt;&gt; DL-cysteine. Has no selenocysteine methyltransferase activity. In Brassica oleracea var. italica (Broccoli), this protein is Homocysteine S-methyltransferase 1 (HMT1).